We begin with the raw amino-acid sequence, 483 residues long: Aspartyl/glutamyl-tRNA(Asn/Gln) amidotransferase subunit B (483 aa).

This sequence belongs to the GatB/GatE family. GatB subfamily. Heterotrimer of A, B and C subunits.

It catalyses the reaction L-glutamyl-tRNA(Gln) + L-glutamine + ATP + H2O = L-glutaminyl-tRNA(Gln) + L-glutamate + ADP + phosphate + H(+). The catalysed reaction is L-aspartyl-tRNA(Asn) + L-glutamine + ATP + H2O = L-asparaginyl-tRNA(Asn) + L-glutamate + ADP + phosphate + 2 H(+). In terms of biological role, allows the formation of correctly charged Asn-tRNA(Asn) or Gln-tRNA(Gln) through the transamidation of misacylated Asp-tRNA(Asn) or Glu-tRNA(Gln) in organisms which lack either or both of asparaginyl-tRNA or glutaminyl-tRNA synthetases. The reaction takes place in the presence of glutamine and ATP through an activated phospho-Asp-tRNA(Asn) or phospho-Glu-tRNA(Gln). The sequence is that of Aspartyl/glutamyl-tRNA(Asn/Gln) amidotransferase subunit B from Roseiflexus castenholzii (strain DSM 13941 / HLO8).